Reading from the N-terminus, the 951-residue chain is Metal transporter CNNM1 (951 aa).

The helical transmembrane segment at Ala-23 to Leu-43 threads the bilayer. The tract at residues Gly-116–Glu-135 is disordered. A CNNM transmembrane domain is found at Leu-218–Glu-414. The next 3 helical transmembrane spans lie at Ala-222 to Leu-242, Leu-282 to Tyr-302, and Ile-321 to Ile-341. CBS domains follow at residues Leu-433–Leu-495 and Tyr-502–Glu-568. Polar residues-rich tracts occupy residues Ser-731–Glu-740 and Lys-814–Thr-824. Disordered stretches follow at residues Ser-731 to Asn-753 and Met-795 to Ala-830. Residues Thr-821 and Thr-824 each carry the phosphothreonine modification. Ser-850 bears the Phosphoserine mark. Residues Lys-920 to Thr-951 form a disordered region. Residues Asp-942 to Thr-951 show a composition bias toward polar residues.

The protein belongs to the ACDP family. As to expression, restricted to brain and testis.

The protein resides in the cell membrane. In terms of biological role, probable metal transporter. This Homo sapiens (Human) protein is Metal transporter CNNM1 (CNNM1).